A 327-amino-acid polypeptide reads, in one-letter code: Methionyl-tRNA formyltransferase (327 aa).

121-124 (SLLP) contacts (6S)-5,6,7,8-tetrahydrofolate.

The protein belongs to the Fmt family.

It catalyses the reaction L-methionyl-tRNA(fMet) + (6R)-10-formyltetrahydrofolate = N-formyl-L-methionyl-tRNA(fMet) + (6S)-5,6,7,8-tetrahydrofolate + H(+). Functionally, attaches a formyl group to the free amino group of methionyl-tRNA(fMet). The formyl group appears to play a dual role in the initiator identity of N-formylmethionyl-tRNA by promoting its recognition by IF2 and preventing the misappropriation of this tRNA by the elongation apparatus. In Burkholderia mallei (strain ATCC 23344), this protein is Methionyl-tRNA formyltransferase.